The primary structure comprises 298 residues: Acetylglutamate kinase (298 aa).

Residues 69 to 70 (GG), Arg91, and Asn196 contribute to the substrate site.

Belongs to the acetylglutamate kinase family. ArgB subfamily.

The protein localises to the cytoplasm. The catalysed reaction is N-acetyl-L-glutamate + ATP = N-acetyl-L-glutamyl 5-phosphate + ADP. Its pathway is amino-acid biosynthesis; L-arginine biosynthesis; N(2)-acetyl-L-ornithine from L-glutamate: step 2/4. In terms of biological role, catalyzes the ATP-dependent phosphorylation of N-acetyl-L-glutamate. In Rhodopseudomonas palustris (strain BisB5), this protein is Acetylglutamate kinase.